A 475-amino-acid chain; its full sequence is tRNA-2-methylthio-N(6)-dimethylallyladenosine synthase (475 aa).

Residues 7–127 (RKLHIKSYGC…LPKLLAKARD (121 aa)) form the MTTase N-terminal domain. Residues cysteine 16, cysteine 52, cysteine 90, cysteine 168, cysteine 172, and cysteine 175 each contribute to the [4Fe-4S] cluster site. A Radical SAM core domain is found at 154–388 (RARGVSAFVT…AQLQALIDAQ (235 aa)). The region spanning 394 to 456 (RAAIGRTVEV…RYSLKGRLAS (63 aa)) is the TRAM domain.

The protein belongs to the methylthiotransferase family. MiaB subfamily. In terms of assembly, monomer. Requires [4Fe-4S] cluster as cofactor.

It localises to the cytoplasm. It catalyses the reaction N(6)-dimethylallyladenosine(37) in tRNA + (sulfur carrier)-SH + AH2 + 2 S-adenosyl-L-methionine = 2-methylsulfanyl-N(6)-dimethylallyladenosine(37) in tRNA + (sulfur carrier)-H + 5'-deoxyadenosine + L-methionine + A + S-adenosyl-L-homocysteine + 2 H(+). Its function is as follows. Catalyzes the methylthiolation of N6-(dimethylallyl)adenosine (i(6)A), leading to the formation of 2-methylthio-N6-(dimethylallyl)adenosine (ms(2)i(6)A) at position 37 in tRNAs that read codons beginning with uridine. The protein is tRNA-2-methylthio-N(6)-dimethylallyladenosine synthase of Afipia carboxidovorans (strain ATCC 49405 / DSM 1227 / KCTC 32145 / OM5) (Oligotropha carboxidovorans).